We begin with the raw amino-acid sequence, 318 residues long: Galactinol synthase 1 (318 aa).

The active site involves lysine 102. Mn(2+) is bound by residues aspartate 118, aspartate 120, and histidine 244.

It belongs to the glycosyltransferase 8 family. Galactosyltransferase subfamily. A divalent metal cation serves as cofactor. As to expression, expressed in seeds, mostly in radicle tips.

Its subcellular location is the cytoplasm. It catalyses the reaction myo-inositol + UDP-alpha-D-galactose = alpha-D-galactosyl-(1-&gt;3)-1D-myo-inositol + UDP + H(+). Functionally, galactinol synthase involved in the biosynthesis of raffinose family oligosaccharides (RFOs) that function as osmoprotectants. May promote plant stress tolerance. The chain is Galactinol synthase 1 (GOLS1) from Solanum lycopersicum (Tomato).